A 41-amino-acid polypeptide reads, in one-letter code: Minor histocompatibility protein HB-1 (41 aa).

The segment at 9–17 (EEKRGSLHV) is loss of recognition by cytotoxic T lymphocyte (CTL).

As to quaternary structure, HB-1 forms a complex with MHC class I HLA-B44. As to expression, expressed in acute lymphoblastic leukemia B-cells and Epstein-Barr virus-transformed B-cells.

Functionally, precursor of the histocomplatibility antigen HB-1. More generally, minor histocomplatibility antigens (mHags) refer to immunogenic peptide which, when complexed with MHC, can generate an immune response after recognition by specific T-cells. The peptides are derived from polymorphic intracellular proteins, which are cleaved by normal pathways of antigen processing. The binding of these peptides to MHC class I or class II molecules and its expression on the cell surface can stimulate T-cell responses and thereby trigger graft rejection or graft-versus-host disease (GVHD) after hematopoietic stem cell transplantation from HLA-identical sibling donor. GVHD is a frequent complication after bone marrow transplantation (BMT), due to mismatch of minor histocomplatibility antigen in HLA-matched sibling marrow transplants. HB-1 is presented on the cell surface by MHC class I HLA-B44. This complex specifically elicits donor-cytotoxic T lymphocyte (CTL) reactivity in B-cell acute lymphoblastic leukemia (B-ALL) after treatment by HLA-identical allogenic bone marrow transplantation (BMT). It induces cell recognition and lysis by CTL. However, HB-1 restricted expression in B-ALL cells and not in normal tissues may allow a specific CTL reactivity against B-ALL without the risk of evoking graft-versus-host disease. The protein is Minor histocompatibility protein HB-1 (HMHB1) of Homo sapiens (Human).